The following is a 600-amino-acid chain: MASNHKSSAPRPISRGGIGLTGRPPSGIRPPSGNVRVATAMPPTTARPGSRGGPLGTGGVLSSQIKVADRPVTQQGLSGMKTGMKGPQRQILDKSYYLGLLRSKISELTTEINKLQKEIEMYNQENSVYLSYEKRAETLAVEIKDFQGQLADYNMLVDKLNTNTEMEEVMSDYNMLKAQNDRETQSMDVIFTERQAKEKQIRSVEEEVEQEKQAADGIIKNMSPEKQVKYIEMKTTNEKLLQELDTLQQQLDSLNMKKESLETEIAHSQVKQEAVLLYEKLYELESHRDQMIAEDKSMGSPMEERERLLKQVKEDNQEIASMERQLTDIKEKINQFSEEIRQLDMDLEEHQGEMNQKYKELKKREENMDAFIETFEETKNQELERKAQIEASIITLLEHCSRNINRMKQISSITNQELKMMQDDLSFKSTEMQKSQTTARNLTSDSQRLQLDLQKMELLESKMTEEQQSLKNKIKQMTADLETYSDLAALKSSAEEKKKKLHQERTVLSTHRNAFKKIMEKLTSDYDTLKRQLQDNETHAQLTNLERKWQHLEQNNFVMKEFIATKSQESDYQPVIKNVMKQIAEYNKTIMDALHNASRS.

Residues 1–64 are disordered; it reads MASNHKSSAP…LGTGGVLSSQ (64 aa). A basic region region spans residues 1–90; the sequence is MASNHKSSAP…KTGMKGPQRQ (90 aa). Positions 22-33 are enriched in low complexity; sequence GRPPSGIRPPSG. The span at 50-59 shows a compositional bias: gly residues; sequence SRGGPLGTGG. R51 is modified (omega-N-methylarginine). T73 carries the phosphothreonine modification. A coiled-coil region spans residues 97–390; the sequence is YLGLLRSKIS…QELERKAQIE (294 aa).

This sequence belongs to the IFT74 family. As to quaternary structure, component of the IFT complex B, at least composed of IFT20, IFT22, IFT25, IFT27, IFT46, IFT52, TRAF3IP1/IFT54, IFT57, IFT74, IFT80, IFT81, and IFT88. Interacts with IFT81; the interaction is direct: within the IFT complex B, IFT74 and IFT81 mediate the transport of tubulin within the cilium. Interacts (via basic region) with beta-tubulin (via acidic region); interaction is direct. Interacts with ARL13B and IFT88. Interacts (via the IFT74/IFT81 heterodimer) with RABL2B. Interacts with IFT57 and IFT70B. In terms of tissue distribution, predominantly expressed in testis, but also detected in other organs containing cilia-bearing cells, including lung, brain and kidney (at protein level).

The protein resides in the cell projection. It localises to the cilium. Its subcellular location is the cytoplasmic vesicle. It is found in the flagellum. The protein localises to the secretory vesicle. The protein resides in the acrosome. In terms of biological role, component of the intraflagellar transport (IFT) complex B: together with IFT81, forms a tubulin-binding module that specifically mediates transport of tubulin within the cilium. Binds beta-tubulin via its basic region. Required for ciliogenesis. Essential for flagellogenesis during spermatogenesis. The chain is Intraflagellar transport protein 74 homolog (Ift74) from Mus musculus (Mouse).